A 106-amino-acid chain; its full sequence is Large ribosomal subunit protein bL21c (106 aa).

Belongs to the bacterial ribosomal protein bL21 family. Part of the 50S ribosomal subunit.

It is found in the plastid. Its subcellular location is the chloroplast. Its function is as follows. This protein binds to 23S rRNA. This is Large ribosomal subunit protein bL21c from Gracilaria tenuistipitata var. liui (Red alga).